The following is a 466-amino-acid chain: Glutamate--tRNA ligase (466 aa).

Residues 10–20 (PSPTGYLHVGG) carry the 'HIGH' region motif. Positions 99, 101, 126, and 128 each coordinate Zn(2+). The 'KMSKS' region motif lies at 237–241 (RLSKR). Lys-240 lines the ATP pocket.

Belongs to the class-I aminoacyl-tRNA synthetase family. Glutamate--tRNA ligase type 1 subfamily. As to quaternary structure, monomer. Requires Zn(2+) as cofactor.

Its subcellular location is the cytoplasm. The catalysed reaction is tRNA(Glu) + L-glutamate + ATP = L-glutamyl-tRNA(Glu) + AMP + diphosphate. Functionally, catalyzes the attachment of glutamate to tRNA(Glu) in a two-step reaction: glutamate is first activated by ATP to form Glu-AMP and then transferred to the acceptor end of tRNA(Glu). This is Glutamate--tRNA ligase from Trichlorobacter lovleyi (strain ATCC BAA-1151 / DSM 17278 / SZ) (Geobacter lovleyi).